The chain runs to 435 residues: Putative pyridoxal-phosphate dependent protein F13B12.4 (435 aa).

The N-terminal stretch at 1-18 (MKLLLLALFLSISASCLA) is a signal peptide. Asparagine 79 carries an N-linked (GlcNAc...) asparagine glycan. Lysine 89 carries the post-translational modification N6-(pyridoxal phosphate)lysine. Residue 235 to 239 (GTGGT) participates in pyridoxal 5'-phosphate binding. Asparagine 277 carries N-linked (GlcNAc...) asparagine glycosylation. Serine 342 is a pyridoxal 5'-phosphate binding site.

This sequence belongs to the cysteine synthase/cystathionine beta-synthase family. Highly divergent.

The chain is Putative pyridoxal-phosphate dependent protein F13B12.4 from Caenorhabditis elegans.